The chain runs to 429 residues: Ribosomal RNA small subunit methyltransferase B (429 aa).

S-adenosyl-L-methionine contacts are provided by residues 254-260 (CAAPGGK), D277, D303, and D322. C375 functions as the Nucleophile in the catalytic mechanism.

It belongs to the class I-like SAM-binding methyltransferase superfamily. RsmB/NOP family.

It is found in the cytoplasm. The catalysed reaction is cytidine(967) in 16S rRNA + S-adenosyl-L-methionine = 5-methylcytidine(967) in 16S rRNA + S-adenosyl-L-homocysteine + H(+). In terms of biological role, specifically methylates the cytosine at position 967 (m5C967) of 16S rRNA. This Escherichia coli O127:H6 (strain E2348/69 / EPEC) protein is Ribosomal RNA small subunit methyltransferase B.